A 127-amino-acid polypeptide reads, in one-letter code: Glycine cleavage system H protein (127 aa).

The 82-residue stretch at 24–105 (AALVGITDFA…YGEGWLVKIR (82 aa)) folds into the Lipoyl-binding domain. The residue at position 65 (Lys65) is an N6-lipoyllysine.

This sequence belongs to the GcvH family. In terms of assembly, the glycine cleavage system is composed of four proteins: P, T, L and H. The cofactor is (R)-lipoate.

The glycine cleavage system catalyzes the degradation of glycine. The H protein shuttles the methylamine group of glycine from the P protein to the T protein. This Chlorobium limicola (strain DSM 245 / NBRC 103803 / 6330) protein is Glycine cleavage system H protein.